A 368-amino-acid chain; its full sequence is Left-right determination factor 1 (368 aa).

The N-terminal stretch at 1-21 (MPFLWLCWALWALSLVSLREA) is a signal peptide. Residues 22–76 (LTGEQILGSLLQQLQLDQPPVLDKADVEGMVIPSHVRTQYVALLQHSHASRSRGK) constitute a propeptide, or 135. Asparagine 158 carries N-linked (GlcNAc...) asparagine glycosylation. 4 disulfides stabilise this stretch: cysteine 253–cysteine 266, cysteine 265–cysteine 318, cysteine 295–cysteine 353, and cysteine 299–cysteine 355.

The protein belongs to the TGF-beta family. In terms of processing, the processing of the protein may also occur at the second R-X-X-R site located at AA 132-135. Processing appears to be regulated in a cell-type specific manner.

It localises to the secreted. Required for left-right axis determination as a regulator of LEFTY2 and NODAL. This chain is Left-right determination factor 1 (Lefty1), found in Mus musculus (Mouse).